The following is a 632-amino-acid chain: Putative acetyl-CoA decarbonylase/synthase complex subunit alpha-like (632 aa).

His-200, His-226, Cys-263, Cys-379, Cys-408, and Cys-438 together coordinate [Ni-4Fe-4S] cluster.

The protein belongs to the Ni-containing carbon monoxide dehydrogenase family.

In terms of biological role, part of the ACDS complex that catalyzes the reversible cleavage of acetyl-CoA, allowing autotrophic growth from CO(2). The alpha-epsilon subcomponent functions as a carbon monoxide dehydrogenase. The chain is Putative acetyl-CoA decarbonylase/synthase complex subunit alpha-like (cdhA2) from Methanopyrus kandleri (strain AV19 / DSM 6324 / JCM 9639 / NBRC 100938).